We begin with the raw amino-acid sequence, 500 residues long: Glycerol kinase (500 aa).

Thr-12 contributes to the ADP binding site. Residues Thr-12, Thr-13, and Ser-14 each coordinate ATP. Thr-12 lines the sn-glycerol 3-phosphate pocket. Arg-16 serves as a coordination point for ADP. Sn-glycerol 3-phosphate is bound by residues Arg-82, Glu-83, Tyr-134, and Asp-244. Positions 82, 83, 134, 244, and 245 each coordinate glycerol. Residues Thr-266 and Gly-309 each coordinate ADP. Positions 266, 309, 313, and 410 each coordinate ATP. ADP-binding residues include Gly-410 and Asn-414.

The protein belongs to the FGGY kinase family. In terms of assembly, homotetramer and homodimer (in equilibrium).

The catalysed reaction is glycerol + ATP = sn-glycerol 3-phosphate + ADP + H(+). The protein operates within polyol metabolism; glycerol degradation via glycerol kinase pathway; sn-glycerol 3-phosphate from glycerol: step 1/1. With respect to regulation, activated by phosphorylation and inhibited by fructose 1,6-bisphosphate (FBP). Its function is as follows. Key enzyme in the regulation of glycerol uptake and metabolism. Catalyzes the phosphorylation of glycerol to yield sn-glycerol 3-phosphate. This is Glycerol kinase from Alkaliphilus metalliredigens (strain QYMF).